The sequence spans 318 residues: Ribose-phosphate pyrophosphokinase 2 (318 aa).

Residue 96-101 (RQDKKD) coordinates ATP. 4 residues coordinate Mg(2+): Asp128, His130, Asp139, and Asp143. His130 lines the ATP pocket. The tract at residues 212–227 (KDRVAILVDDMADTCG) is binding of phosphoribosylpyrophosphate.

It belongs to the ribose-phosphate pyrophosphokinase family. As to quaternary structure, homodimer. The active form is probably a hexamer composed of 3 homodimers. Requires Mg(2+) as cofactor.

The enzyme catalyses D-ribose 5-phosphate + ATP = 5-phospho-alpha-D-ribose 1-diphosphate + AMP + H(+). Its pathway is metabolic intermediate biosynthesis; 5-phospho-alpha-D-ribose 1-diphosphate biosynthesis; 5-phospho-alpha-D-ribose 1-diphosphate from D-ribose 5-phosphate (route I): step 1/1. With respect to regulation, activated by magnesium and inorganic phosphate. Competitively or non-competitively inhibited by ADP, 2,3-bisphosphoglyceride or GDP. Its function is as follows. Catalyzes the synthesis of phosphoribosylpyrophosphate (PRPP) that is essential for nucleotide synthesis. The polypeptide is Ribose-phosphate pyrophosphokinase 2 (PRPS2) (Homo sapiens (Human)).